Consider the following 219-residue polypeptide: Transcriptional regulator AcuR (219 aa).

The tract at residues 1–25 is disordered; sequence MPLTDTPPSVPQKPRRGRPRGAPDA. The 61-residue stretch at 26-86 folds into the HTH tetR-type domain; sequence SLAHQSLIRA…ALIEAYDTYF (61 aa). A DNA-binding region (H-T-H motif) is located at residues 49-68; sequence GVDEILKAARVPKGSFYHYF.

In terms of biological role, a transcriptional repressor for its operon. Probably binds to 2 operator sequences in the promoter. In Cereibacter sphaeroides (strain ATCC 17023 / DSM 158 / JCM 6121 / CCUG 31486 / LMG 2827 / NBRC 12203 / NCIMB 8253 / ATH 2.4.1.) (Rhodobacter sphaeroides), this protein is Transcriptional regulator AcuR (acuR).